The following is a 653-amino-acid chain: Alpha-L-iduronidase (653 aa).

The N-terminal stretch at Met-1 to Glu-27 is a signal peptide. Positions 54, 56, and 58 each coordinate alpha-D-mannopyranose. Residue His-91 coordinates alpha-L-iduronate. Residue Asn-110 is glycosylated (N-linked (GlcNAc...) asparagine). Alpha-L-iduronate-binding residues include Asn-181 and Glu-182. Catalysis depends on Glu-182, which acts as the Proton donor. Asn-190 carries an N-linked (GlcNAc...) asparagine glycan. The alpha-L-iduronate site is built by Lys-264, Glu-299, and Gly-305. Glu-299 acts as the Nucleophile in catalysis. Trp-306 contributes to the alpha-D-mannopyranose binding site. An N-linked (GlcNAc...) asparagine glycan is attached at Asn-336. The alpha-L-iduronate site is built by Asp-349 and Arg-363. Residues Asn-372, Asn-415, and Asn-451 are each glycosylated (N-linked (GlcNAc...) asparagine). Positions 488 and 492 each coordinate alpha-D-mannopyranose. Arg-492 contacts beta-D-mannose. Cys-541 and Cys-577 are oxidised to a cystine.

The protein belongs to the glycosyl hydrolase 39 family. Monomer. Post-translationally, N-glycosylation at Asn-372 contributes to substrate binding and is required for full enzymatic activity. In terms of tissue distribution, ubiquitous.

It is found in the lysosome. It carries out the reaction Hydrolysis of unsulfated alpha-L-iduronosidic linkages in dermatan sulfate.. This Homo sapiens (Human) protein is Alpha-L-iduronidase (IDUA).